The following is a 310-amino-acid chain: tRNA uridine(34) hydroxylase (310 aa).

The Rhodanese domain occupies 134–232 (DDPDTLLIDT…YFEEVSQTES (99 aa)). Cys-192 functions as the Cysteine persulfide intermediate in the catalytic mechanism.

Belongs to the TrhO family.

It catalyses the reaction uridine(34) in tRNA + AH2 + O2 = 5-hydroxyuridine(34) in tRNA + A + H2O. Functionally, catalyzes oxygen-dependent 5-hydroxyuridine (ho5U) modification at position 34 in tRNAs. This chain is tRNA uridine(34) hydroxylase, found in Prochlorococcus marinus (strain MIT 9313).